The sequence spans 312 residues: Dihydroorotate dehydrogenase B (NAD(+)), catalytic subunit (312 aa).

FMN is bound by residues Ser21 and 45-46 (KA). Substrate is bound by residues Lys45 and 69–73 (NAIGL). Residues Asn99 and Asn127 each contribute to the FMN site. A substrate-binding site is contributed by Asn127. Cys130 serves as the catalytic Nucleophile. FMN is bound by residues Lys165 and Ile191. 192-193 (NT) contacts substrate. FMN contacts are provided by residues Gly217, 243–244 (GG), and 265–266 (GT).

This sequence belongs to the dihydroorotate dehydrogenase family. Type 1 subfamily. As to quaternary structure, heterotetramer of 2 PyrK and 2 PyrD type B subunits. The cofactor is FMN.

The protein localises to the cytoplasm. It catalyses the reaction (S)-dihydroorotate + NAD(+) = orotate + NADH + H(+). It functions in the pathway pyrimidine metabolism; UMP biosynthesis via de novo pathway; orotate from (S)-dihydroorotate (NAD(+) route): step 1/1. Its function is as follows. Catalyzes the conversion of dihydroorotate to orotate with NAD(+) as electron acceptor. This chain is Dihydroorotate dehydrogenase B (NAD(+)), catalytic subunit (pyrD), found in Anoxybacillus flavithermus (strain DSM 21510 / WK1).